The sequence spans 172 residues: Translation initiation factor IF-3 (172 aa).

The protein belongs to the IF-3 family. As to quaternary structure, monomer.

The protein resides in the cytoplasm. IF-3 binds to the 30S ribosomal subunit and shifts the equilibrium between 70S ribosomes and their 50S and 30S subunits in favor of the free subunits, thus enhancing the availability of 30S subunits on which protein synthesis initiation begins. In Campylobacter concisus (strain 13826), this protein is Translation initiation factor IF-3.